Reading from the N-terminus, the 124-residue chain is MATINQLVRKPRAKQVVKSNVPALEACPQKRGVCTRVYTTTPKKPNSALRKVCRVRLTNGFEVTSYIGGEGHNLQEHSVVLIRGGRVKDLPGVRYHTVRGALDCAGVNDRKKGRSKYGVKRPKS.

At aspartate 89 the chain carries 3-methylthioaspartic acid.

Belongs to the universal ribosomal protein uS12 family. As to quaternary structure, part of the 30S ribosomal subunit. Contacts proteins S8 and S17. May interact with IF1 in the 30S initiation complex.

With S4 and S5 plays an important role in translational accuracy. Its function is as follows. Interacts with and stabilizes bases of the 16S rRNA that are involved in tRNA selection in the A site and with the mRNA backbone. Located at the interface of the 30S and 50S subunits, it traverses the body of the 30S subunit contacting proteins on the other side and probably holding the rRNA structure together. The combined cluster of proteins S8, S12 and S17 appears to hold together the shoulder and platform of the 30S subunit. This Aliivibrio fischeri (strain ATCC 700601 / ES114) (Vibrio fischeri) protein is Small ribosomal subunit protein uS12.